The primary structure comprises 86 residues: Maxadilan (86 aa).

An N-terminal signal peptide occupies residues methionine 1–glycine 23. 2 disulfides stabilise this stretch: cysteine 24–cysteine 28 and cysteine 37–cysteine 74.

As to quaternary structure, interacts with human ADCYAP1R1. Salivary gland (at protein level).

It is found in the secreted. Potent vasodilator. Activates mammalian ADCYAP1R1, a PAC1 receptor, and induces cAMP accumulation in host cells. Causes the development of erythema following superficial injection into the rabbit or human skin. Influences adaptive immune responses mediated by host dendritic cells. Reduces surface expression of CD80 on host dendritic cells stimulated with lipopolysaccharides (LPS) and induces concomitant increase in CD86 expression on a subpopulation of these cells. Redirects cytokine secretion by LPS-activated host dendritic cells toward type 2 responses: decreases secretion of TNF-alpha/TNF, IL-12p40/IL12B and IFN-gamma/IFNG, and increases secretion of IL6 and IL10. Reduces ability of host bone marrow-derived dendritic cells to stimulate proliferation of CD4(+) T-cells. Reprograms the effect of LPS-activated host dendritic cells on cytokine secretion profiles in host T-cells: decreases secretion of TNF-alpha/TNF and IFN-gamma/IFNG, increases secretion of IL6 and IL13, and increases secretion of pro-inflammatory cytokine IL-1beta/IL1B in mixed lymphocyte reaction (MLR) cultures. Reduces LPS-induced up-regulation of CCR7 in activated host dendritic cells. Inhibits IFN-gamma/IFNG and IL-12p40/IL12B production by human peripheral blood mononuclear cells. Increases IL6 and decreases TNF-alpha/TNF production by LPS-stimulated human monocytes. Its function is as follows. (Microbial infection) Probably plays a critical role in the enhancement of Leishmania infectivity in the host attributed to sand fly saliva. The sequence is that of Maxadilan from Lutzomyia longipalpis (Sand fly).